Consider the following 471-residue polypeptide: Glutamate--tRNA ligase (471 aa).

Positions 9–19 (PSPTGYLHVGG) match the 'HIGH' region motif. Positions 98, 100, 125, and 127 each coordinate Zn(2+). Residues 237 to 241 (KLSKR) carry the 'KMSKS' region motif. K240 serves as a coordination point for ATP.

It belongs to the class-I aminoacyl-tRNA synthetase family. Glutamate--tRNA ligase type 1 subfamily. Monomer. It depends on Zn(2+) as a cofactor.

The protein localises to the cytoplasm. It catalyses the reaction tRNA(Glu) + L-glutamate + ATP = L-glutamyl-tRNA(Glu) + AMP + diphosphate. Catalyzes the attachment of glutamate to tRNA(Glu) in a two-step reaction: glutamate is first activated by ATP to form Glu-AMP and then transferred to the acceptor end of tRNA(Glu). This Citrobacter koseri (strain ATCC BAA-895 / CDC 4225-83 / SGSC4696) protein is Glutamate--tRNA ligase.